The sequence spans 748 residues: LPS-assembly protein LptD (748 aa).

The signal sequence occupies residues M1–A19.

This sequence belongs to the LptD family. In terms of assembly, component of the lipopolysaccharide transport and assembly complex. Interacts with LptE and LptA.

The protein resides in the cell outer membrane. In terms of biological role, together with LptE, is involved in the assembly of lipopolysaccharide (LPS) at the surface of the outer membrane. This chain is LPS-assembly protein LptD, found in Pseudoalteromonas translucida (strain TAC 125).